A 148-amino-acid chain; its full sequence is PTS system fructose-like EIIA component (148 aa).

A PTS EIIA type-2 domain is found at 2–145 (AALTASCIDL…DQVLALLNQT (144 aa)). His-64 serves as the catalytic Tele-phosphohistidine intermediate. A Phosphohistidine; by HPr modification is found at His-64.

Its subcellular location is the cytoplasm. In terms of biological role, the phosphoenolpyruvate-dependent sugar phosphotransferase system (sugar PTS), a major carbohydrate active transport system, catalyzes the phosphorylation of incoming sugar substrates concomitantly with their translocation across the cell membrane. The enzyme II FrvAB PTS system is involved in fructose transport. This Escherichia coli (strain K12) protein is PTS system fructose-like EIIA component.